A 448-amino-acid chain; its full sequence is Trigger factor (448 aa).

In terms of domain architecture, PPIase FKBP-type spans 172–257; sequence GDRVTVDFVG…MKKIEWPHLP (86 aa).

Belongs to the FKBP-type PPIase family. Tig subfamily.

The protein localises to the cytoplasm. It catalyses the reaction [protein]-peptidylproline (omega=180) = [protein]-peptidylproline (omega=0). Its function is as follows. Involved in protein export. Acts as a chaperone by maintaining the newly synthesized protein in an open conformation. Functions as a peptidyl-prolyl cis-trans isomerase. This Burkholderia ambifaria (strain ATCC BAA-244 / DSM 16087 / CCUG 44356 / LMG 19182 / AMMD) (Burkholderia cepacia (strain AMMD)) protein is Trigger factor.